We begin with the raw amino-acid sequence, 430 residues long: Adenylosuccinate synthetase (430 aa).

GTP is bound by residues 12-18 (GDEGKGK) and 40-42 (GHT). Asp13 acts as the Proton acceptor in catalysis. Mg(2+) contacts are provided by Asp13 and Gly40. Residues 13–16 (DEGK), 38–41 (NAGH), Thr130, Arg144, Gln224, Thr239, and Arg303 contribute to the IMP site. The active-site Proton donor is the His41. 299–305 (TVTGRKR) lines the substrate pocket. Residues Arg305, 331–333 (KLD), and 413–415 (STS) contribute to the GTP site.

This sequence belongs to the adenylosuccinate synthetase family. In terms of assembly, homodimer. It depends on Mg(2+) as a cofactor.

The protein localises to the cytoplasm. It carries out the reaction IMP + L-aspartate + GTP = N(6)-(1,2-dicarboxyethyl)-AMP + GDP + phosphate + 2 H(+). The protein operates within purine metabolism; AMP biosynthesis via de novo pathway; AMP from IMP: step 1/2. Functionally, plays an important role in the de novo pathway of purine nucleotide biosynthesis. Catalyzes the first committed step in the biosynthesis of AMP from IMP. This is Adenylosuccinate synthetase from Cereibacter sphaeroides (strain ATCC 17029 / ATH 2.4.9) (Rhodobacter sphaeroides).